The primary structure comprises 163 residues: Staphylokinase (163 aa).

A signal peptide spans 1–27; that stretch reads MLKRGLLFLTVLLLLFSFSSITNEVSA.

The protein belongs to the staphylokinase family.

Its subcellular location is the secreted. Functionally, potent plasminogen activator that converts plasminogen into plasmin. It forms a 1:1 complex with plasmin, which in turn activates other plasminogen molecules. The protein is Staphylokinase (sak) of Staphylococcus aureus (strain MRSA252).